A 169-amino-acid polypeptide reads, in one-letter code: Ureidoglycolate lyase (169 aa).

Belongs to the ureidoglycolate lyase family. Homodimer. The cofactor is Ni(2+).

The catalysed reaction is (S)-ureidoglycolate = urea + glyoxylate. It participates in nitrogen metabolism; (S)-allantoin degradation. Its function is as follows. Catalyzes the catabolism of the allantoin degradation intermediate (S)-ureidoglycolate, generating urea and glyoxylate. Involved in the utilization of allantoin as nitrogen source. This Brucella ovis (strain ATCC 25840 / 63/290 / NCTC 10512) protein is Ureidoglycolate lyase.